We begin with the raw amino-acid sequence, 400 residues long: Acetyl-CoA decarbonylase/synthase complex subunit delta (400 aa).

The protein belongs to the CdhD family. In terms of assembly, heterodimer of delta and gamma chains. The ACDS complex is made up of alpha, epsilon, beta, gamma and delta chains with a probable stoichiometry of (alpha(2)epsilon(2))(4)-beta(8)-(gamma(1)delta(1))(8).

Its function is as follows. Part of a complex that catalyzes the reversible cleavage of acetyl-CoA, allowing autotrophic growth from CO(2). Probably maintains the overall quaternary structure of the ACDS complex. The sequence is that of Acetyl-CoA decarbonylase/synthase complex subunit delta from Methanopyrus kandleri (strain AV19 / DSM 6324 / JCM 9639 / NBRC 100938).